A 571-amino-acid chain; its full sequence is Acetolactate synthase large subunit (571 aa).

E51 is a thiamine diphosphate binding site. FAD contacts are provided by residues R153, 261–282 (HGTY…IGVR), and 304–323 (DIDP…IVGD). The thiamine pyrophosphate binding stretch occupies residues 394–474 (QHQMFTALYY…VLILNLNNSS (81 aa)). The Mg(2+) site is built by D445 and N472.

The protein belongs to the TPP enzyme family. In terms of assembly, dimer of large and small chains. Mg(2+) serves as cofactor. Requires thiamine diphosphate as cofactor.

The enzyme catalyses 2 pyruvate + H(+) = (2S)-2-acetolactate + CO2. It participates in amino-acid biosynthesis; L-isoleucine biosynthesis; L-isoleucine from 2-oxobutanoate: step 1/4. The protein operates within amino-acid biosynthesis; L-valine biosynthesis; L-valine from pyruvate: step 1/4. The polypeptide is Acetolactate synthase large subunit (ilvI) (Buchnera aphidicola subsp. Acyrthosiphon pisum (strain APS) (Acyrthosiphon pisum symbiotic bacterium)).